A 119-amino-acid chain; its full sequence is Large ribosomal subunit protein uL22 (119 aa).

It belongs to the universal ribosomal protein uL22 family. As to quaternary structure, part of the 50S ribosomal subunit.

In terms of biological role, this protein binds specifically to 23S rRNA; its binding is stimulated by other ribosomal proteins, e.g. L4, L17, and L20. It is important during the early stages of 50S assembly. It makes multiple contacts with different domains of the 23S rRNA in the assembled 50S subunit and ribosome. The globular domain of the protein is located near the polypeptide exit tunnel on the outside of the subunit, while an extended beta-hairpin is found that lines the wall of the exit tunnel in the center of the 70S ribosome. The chain is Large ribosomal subunit protein uL22 from Rickettsia bellii (strain OSU 85-389).